Consider the following 181-residue polypeptide: Peptide deformylase (181 aa).

Fe cation contacts are provided by C104 and H146. E147 is a catalytic residue. H150 lines the Fe cation pocket.

Belongs to the polypeptide deformylase family. Requires Fe(2+) as cofactor.

It catalyses the reaction N-terminal N-formyl-L-methionyl-[peptide] + H2O = N-terminal L-methionyl-[peptide] + formate. Removes the formyl group from the N-terminal Met of newly synthesized proteins. Requires at least a dipeptide for an efficient rate of reaction. N-terminal L-methionine is a prerequisite for activity but the enzyme has broad specificity at other positions. This is Peptide deformylase from Helicobacter hepaticus (strain ATCC 51449 / 3B1).